An 88-amino-acid polypeptide reads, in one-letter code: MLAFCYSLPNAGDVIKGRVYEKDYALYIYLFDYPHFEAILAESVKMHMDRYVEYRDKLVGKTVKVKVIRVDYTKGYIDVNYKRMCRHQ.

Residues 8–82 (LPNAGDVIKG…TKGYIDVNYK (75 aa)) form the S1 motif domain. 2 binding to host EIF2AK2/PKR regions span residues 43–53 (SVKMHMDRYVE) and 74–79 (KGYIDV).

It belongs to the poxviridae K3 protein family. As to quaternary structure, interacts with host EIF2AK2/PKR kinase.

In terms of biological role, viral mimic of EIF2S1/eIF-2alpha that acts as a pseudosubstrate for EIF2AK2/PKR kinase. Inhibits therefore EIF2S1/eIF-2alpha phosphorylation by host EIF2AK2/PKR kinase and prevents protein synthesis shutoff. Determinant of host species specificity. The chain is Protein K3 from Vaccinia virus (strain Western Reserve) (VACV).